The sequence spans 96 residues: Large ribosomal subunit protein bL27 (96 aa).

Residues 1–9 (MLRLDLQFF) constitute a propeptide that is removed on maturation. Residues 1 to 36 (MLRLDLQFFSTKKGQGSSKNGRDSESKRLGSKRADG) form a disordered region. The segment covering 8–19 (FFSTKKGQGSSK) has biased composition (polar residues). Over residues 20–35 (NGRDSESKRLGSKRAD) the composition is skewed to basic and acidic residues.

Belongs to the bacterial ribosomal protein bL27 family. In terms of processing, the N-terminus is cleaved by ribosomal processing cysteine protease Prp.

The polypeptide is Large ribosomal subunit protein bL27 (Oceanobacillus iheyensis (strain DSM 14371 / CIP 107618 / JCM 11309 / KCTC 3954 / HTE831)).